The following is a 112-amino-acid chain: ANEACLKMLLEIGSVKRIPEFIARAKDKNDPFRLMGFGHRVYKNYDPRAKIMQKTCHEVLKELNIQNDPLLDIAIELEKIALNDEYFVEKKLYPNVDFYSGITLKALGFPTE.

Active-site residues include histidine 39 and aspartate 97.

Belongs to the citrate synthase family.

The enzyme catalyses oxaloacetate + acetyl-CoA + H2O = citrate + CoA + H(+). It functions in the pathway carbohydrate metabolism; tricarboxylic acid cycle; isocitrate from oxaloacetate: step 1/2. The chain is Citrate synthase (gltA) from Bartonella vinsonii subsp. berkhoffii.